The primary structure comprises 179 residues: Peptidyl-tRNA hydrolase (179 aa).

TRNA is bound at residue Y15. Residue H20 is the Proton acceptor of the active site. 3 residues coordinate tRNA: Y66, N68, and N114.

It belongs to the PTH family. Monomer.

The protein localises to the cytoplasm. The catalysed reaction is an N-acyl-L-alpha-aminoacyl-tRNA + H2O = an N-acyl-L-amino acid + a tRNA + H(+). Hydrolyzes ribosome-free peptidyl-tRNAs (with 1 or more amino acids incorporated), which drop off the ribosome during protein synthesis, or as a result of ribosome stalling. Functionally, catalyzes the release of premature peptidyl moieties from peptidyl-tRNA molecules trapped in stalled 50S ribosomal subunits, and thus maintains levels of free tRNAs and 50S ribosomes. The protein is Peptidyl-tRNA hydrolase of Chlamydia trachomatis serovar L2b (strain UCH-1/proctitis).